The primary structure comprises 27 residues: CYIQNCPRGGKRSYPDTAVPQCIPCGP.

An intrachain disulfide couples Cys-1 to Cys-6. A Glycine amide modification is found at Gly-9.

Belongs to the vasopressin/oxytocin family.

Functionally, vasotocin is an antidiuretic hormone. This chain is Vasotocin-neurophysin VT, found in Sclerophrys regularis (Common African toad).